The chain runs to 128 residues: Sulfurtransferase TusD (128 aa).

The active-site Cysteine persulfide intermediate is the C78.

The protein belongs to the DsrE/TusD family. As to quaternary structure, heterohexamer, formed by a dimer of trimers. The hexameric TusBCD complex contains 2 copies each of TusB, TusC and TusD. The TusBCD complex interacts with TusE.

The protein resides in the cytoplasm. Its function is as follows. Part of a sulfur-relay system required for 2-thiolation of 5-methylaminomethyl-2-thiouridine (mnm(5)s(2)U) at tRNA wobble positions. Accepts sulfur from TusA and transfers it in turn to TusE. The polypeptide is Sulfurtransferase TusD (Salmonella newport (strain SL254)).